Consider the following 450-residue polypeptide: Tubulin alpha-2 chain (450 aa).

Gln-11 serves as a coordination point for GTP. N6-acetyllysine is present on Lys-40. 6 residues coordinate GTP: Glu-71, Gly-144, Thr-145, Thr-179, Asn-206, and Asn-228. Glu-71 provides a ligand contact to Mg(2+). Glu-254 is an active-site residue.

This sequence belongs to the tubulin family. Dimer of alpha and beta chains. A typical microtubule is a hollow water-filled tube with an outer diameter of 25 nm and an inner diameter of 15 nM. Alpha-beta heterodimers associate head-to-tail to form protofilaments running lengthwise along the microtubule wall with the beta-tubulin subunit facing the microtubule plus end conferring a structural polarity. Microtubules usually have 13 protofilaments but different protofilament numbers can be found in some organisms and specialized cells. Mg(2+) is required as a cofactor. In terms of processing, undergoes a tyrosination/detyrosination cycle, the cyclic removal and re-addition of a C-terminal tyrosine residue by the enzymes tubulin tyrosine carboxypeptidase (TTCP) and tubulin tyrosine ligase (TTL), respectively. Acetylation of alpha chains at Lys-40 stabilizes microtubules and affects affinity and processivity of microtubule motors. This modification has a role in multiple cellular functions, ranging from cell motility, cell cycle progression or cell differentiation to intracellular trafficking and signaling.

It is found in the cytoplasm. Its subcellular location is the cytoskeleton. The catalysed reaction is GTP + H2O = GDP + phosphate + H(+). Its function is as follows. Tubulin is the major constituent of microtubules, a cylinder consisting of laterally associated linear protofilaments composed of alpha- and beta-tubulin heterodimers. Microtubules grow by the addition of GTP-tubulin dimers to the microtubule end, where a stabilizing cap forms. Below the cap, tubulin dimers are in GDP-bound state, owing to GTPase activity of alpha-tubulin. The sequence is that of Tubulin alpha-2 chain from Gossypium hirsutum (Upland cotton).